The chain runs to 491 residues: Rab5 GDP/GTP exchange factor (491 aa).

The interval 1–74 (MSLKSERRGI…EEEAFASSQS (74 aa)) is interaction with ubiquitinated proteins. The segment at 13 to 47 (DQSELLCKKGCGYYGNPAWQGFCSKCWREEYHKAR) adopts an A20-type zinc-finger fold. The Zn(2+) site is built by cysteine 19, cysteine 23, cysteine 35, and cysteine 38. The interval 66 to 85 (EEAFASSQSSQGAQSLTFSK) is disordered. The span at 69–84 (FASSQSSQGAQSLTFS) shows a compositional bias: low complexity. 2 positions are modified to phosphoserine: serine 124 and serine 132. N6-acetyllysine is present on residues lysine 151 and lysine 170. The region spanning 232 to 375 (EKKDLAIQKR…IEKLDAQSLN (144 aa)) is the VPS9 domain. Residues serine 373, serine 377, and serine 390 each carry the phosphoserine modification. Residues 407–448 (VKQMYKNLDLLSQLNERQERIMNEAKKLEKDLIDWTDGIAKE) adopt a coiled-coil conformation. Residues 462–491 (PPNQPLAAIDSENVENDKLPPPLQPQVYAG) are disordered.

As to quaternary structure, heterodimer with RABEP1. The heterodimer binds RAB4A and RAB5A that have been activated by GTP-binding. Binds TSC2, GGA1, GGA2, GGA3, AP1G1 and AP1G2. Interacts with RAB21, and with 100-fold lower affinity also with RAB22. Interacts with ubiquitinated EGFR. Interacts with RGS14; the interaction is GTP-dependent. In terms of processing, monoubiquitinated. In terms of tissue distribution, expressed in the white matter tracts of the cerebellum, the fimbria hippocampi and the corpus callosum.

It localises to the cytoplasm. The protein resides in the early endosome. The protein localises to the recycling endosome. Functionally, rab effector protein acting as linker between gamma-adaptin, RAB4A or RAB5A. Involved in endocytic membrane fusion and membrane trafficking of recycling endosomes. Stimulates nucleotide exchange on RAB5A. Can act as a ubiquitin ligase. The protein is Rab5 GDP/GTP exchange factor (Rabgef1) of Mus musculus (Mouse).